A 275-amino-acid polypeptide reads, in one-letter code: uncharacterized protein (275 aa).

Belongs to the MtfA family.

This is an uncharacterized protein from Synechocystis sp. (strain ATCC 27184 / PCC 6803 / Kazusa).